We begin with the raw amino-acid sequence, 649 residues long: ATP-dependent DNA helicase Q1 (649 aa).

In terms of domain architecture, Helicase ATP-binding spans 100-275 (INVTMAGKEV…QKILCIEKCF (176 aa)). 113 to 120 (MPTGGGKG) contacts ATP. The short motif at 219–222 (DEVH) is the DEVH box element. Residues 300 to 451 (FIEDIVKLIN…EMVSYCQNIS (152 aa)) enclose the Helicase C-terminal domain. Zn(2+) contacts are provided by Cys453, Cys471, Cys475, and Cys478. N6-acetyllysine occurs at positions 514 and 522. A phosphoserine mark is found at Ser597 and Ser602. The span at 597–608 (SFRVESSQTCHS) shows a compositional bias: polar residues. Residues 597–649 (SFRVESSQTCHSEQGDKKMEEKNSGNFQKKAANMLQQSGSKNTGAKKRKIDDA) form a disordered region. Over residues 609–619 (EQGDKKMEEKN) the composition is skewed to basic and acidic residues. The span at 630-639 (MLQQSGSKNT) shows a compositional bias: polar residues. Position 634 is a phosphoserine (Ser634). A compositionally biased stretch (basic residues) spans 640-649 (GAKKRKIDDA).

It belongs to the helicase family. RecQ subfamily. May form homodimers or higher order oligomers. Interacts with EXO1. Interacts with MLH1. Interacts with PARP1. Mg(2+) serves as cofactor. The cofactor is Mn(2+). Requires Zn(2+) as cofactor.

It is found in the nucleus. It carries out the reaction Couples ATP hydrolysis with the unwinding of duplex DNA by translocating in the 3'-5' direction.. It catalyses the reaction ATP + H2O = ADP + phosphate + H(+). The catalysed reaction is dATP + H2O = dADP + phosphate + H(+). Its function is as follows. DNA helicase that plays a role in DNA damage repair and genome stability. Exhibits a magnesium- and ATP-dependent DNA-helicase activity that unwinds single- and double-stranded DNA in a 3'-5' direction. Plays a role in restoring regressed replication forks. Required to restart stalled replication forks induced by abortive topoisomerase 1 and 2 lesions. May play a role in the repair of DNA that is damaged by ultraviolet light or other mutagens. The polypeptide is ATP-dependent DNA helicase Q1 (RECQL) (Pongo abelii (Sumatran orangutan)).